The following is a 238-amino-acid chain: Chromosome partition protein MukE (238 aa).

It belongs to the MukE family. Interacts, and probably forms a ternary complex, with MukF and MukB. The complex formation is stimulated by calcium or magnesium.

The protein localises to the cytoplasm. It localises to the nucleoid. Involved in chromosome condensation, segregation and cell cycle progression. May participate in facilitating chromosome segregation by condensation DNA from both sides of a centrally located replisome during cell division. Probably acts via its interaction with MukB and MukF. This is Chromosome partition protein MukE from Haemophilus ducreyi (strain 35000HP / ATCC 700724).